Consider the following 117-residue polypeptide: MTRIKRGYIARRRRTKIRLFASSFQGARSRLTRTITQQKIRALVSAHQDRGRQKRDFRRLWITRINAVIRANKVYYSYSTLIHHLYKRQLLLNRKILAQIAILNRNCLYMISNEILK.

It belongs to the bacterial ribosomal protein bL20 family.

Its subcellular location is the plastid. The protein resides in the chloroplast. In terms of biological role, binds directly to 23S ribosomal RNA and is necessary for the in vitro assembly process of the 50S ribosomal subunit. It is not involved in the protein synthesizing functions of that subunit. The sequence is that of Large ribosomal subunit protein bL20c from Morus indica (Mulberry).